Consider the following 266-residue polypeptide: Putative pyruvate, phosphate dikinase regulatory protein (266 aa).

Residue 149-156 coordinates ADP; it reads GVSRTSKT.

The protein belongs to the pyruvate, phosphate/water dikinase regulatory protein family. PDRP subfamily.

The enzyme catalyses N(tele)-phospho-L-histidyl/L-threonyl-[pyruvate, phosphate dikinase] + ADP = N(tele)-phospho-L-histidyl/O-phospho-L-threonyl-[pyruvate, phosphate dikinase] + AMP + H(+). The catalysed reaction is N(tele)-phospho-L-histidyl/O-phospho-L-threonyl-[pyruvate, phosphate dikinase] + phosphate + H(+) = N(tele)-phospho-L-histidyl/L-threonyl-[pyruvate, phosphate dikinase] + diphosphate. In terms of biological role, bifunctional serine/threonine kinase and phosphorylase involved in the regulation of the pyruvate, phosphate dikinase (PPDK) by catalyzing its phosphorylation/dephosphorylation. This Halothermothrix orenii (strain H 168 / OCM 544 / DSM 9562) protein is Putative pyruvate, phosphate dikinase regulatory protein.